Reading from the N-terminus, the 475-residue chain is Citrate synthase, mitochondrial (475 aa).

Catalysis depends on residues histidine 310, histidine 356, and aspartate 411.

Belongs to the citrate synthase family.

Its subcellular location is the mitochondrion matrix. The catalysed reaction is oxaloacetate + acetyl-CoA + H2O = citrate + CoA + H(+). It participates in carbohydrate metabolism; tricarboxylic acid cycle; isocitrate from oxaloacetate: step 1/2. The chain is Citrate synthase, mitochondrial (cit-1) from Aspergillus niger.